A 213-amino-acid polypeptide reads, in one-letter code: Large ribosomal subunit protein uL1 (213 aa).

The protein belongs to the universal ribosomal protein uL1 family. As to quaternary structure, part of the 50S ribosomal subunit.

In terms of biological role, binds directly to 23S rRNA. Probably involved in E site tRNA release. Functionally, protein L1 is also a translational repressor protein, it controls the translation of its operon by binding to its mRNA. The chain is Large ribosomal subunit protein uL1 from Methanoculleus marisnigri (strain ATCC 35101 / DSM 1498 / JR1).